A 165-amino-acid chain; its full sequence is Phosphopantetheine adenylyltransferase (165 aa).

Residue Thr-9 participates in substrate binding. Residues Thr-9–Phe-10 and His-17 contribute to the ATP site. Lys-41, Leu-73, and Arg-87 together coordinate substrate. ATP contacts are provided by residues Gly-88–Arg-90, Glu-98, and Leu-123–Arg-129.

Belongs to the bacterial CoaD family. Homohexamer. Mg(2+) is required as a cofactor.

It is found in the cytoplasm. It catalyses the reaction (R)-4'-phosphopantetheine + ATP + H(+) = 3'-dephospho-CoA + diphosphate. It participates in cofactor biosynthesis; coenzyme A biosynthesis; CoA from (R)-pantothenate: step 4/5. In terms of biological role, reversibly transfers an adenylyl group from ATP to 4'-phosphopantetheine, yielding dephospho-CoA (dPCoA) and pyrophosphate. The protein is Phosphopantetheine adenylyltransferase of Rhizorhabdus wittichii (strain DSM 6014 / CCUG 31198 / JCM 15750 / NBRC 105917 / EY 4224 / RW1) (Sphingomonas wittichii).